A 672-amino-acid polypeptide reads, in one-letter code: Iron-phytosiderophore transporter YSL15 (672 aa).

Basic and acidic residues predominate over residues 1–11 (MEHADADRTRV). The interval 1–27 (MEHADADRTRVAPEIGSLHDEDAEADP) is disordered. A run of 14 helical transmembrane segments spans residues 47 to 67 (GVVA…KIAL), 70 to 90 (GLVP…LRGW), 115 to 135 (CAVA…LLGL), 158 to 178 (GIGW…LSLI), 218 to 238 (LHGF…QWFY), 279 to 299 (LVNL…WPLI), 325 to 345 (FLCI…VTGV), 390 to 410 (MAYS…PIMF), 418 to 438 (VIIA…GAGL), 450 to 470 (IALF…AGLV), 504 to 524 (VGEL…FMLF), 556 to 576 (ISAL…FAVL), 602 to 622 (FLVG…LFAW), and 630 to 650 (AAFM…IWTF).

This sequence belongs to the YSL (TC 2.A.67.2) family. In terms of tissue distribution, expressed in root phloem and at low levels in the shoot companion cells.

The protein localises to the cell membrane. Functionally, involved in Fe(3+) uptake from the rhizosphere and phloem transport of iron. Plays an important role in iron homeostasis during the early stages of growth. Transports Fe(3+)-phytosiderophore, but not Fe(3+)- or Fe(2+)-nicotianamine. May not transport other chelated metals. The chain is Iron-phytosiderophore transporter YSL15 (YSL15) from Oryza sativa subsp. japonica (Rice).